Reading from the N-terminus, the 302-residue chain is uncharacterized protein (302 aa).

Its function is as follows. May be a membrane-bound protein, possibly involved in IAA or IAA-Lysine transport. This is an uncharacterized protein from Pseudomonas savastanoi (Pseudomonas syringae pv. savastanoi).